We begin with the raw amino-acid sequence, 434 residues long: Enolase (434 aa).

Gln-163 is a binding site for (2R)-2-phosphoglycerate. The active-site Proton donor is Glu-205. Mg(2+) is bound by residues Asp-242, Glu-289, and Asp-316. 4 residues coordinate (2R)-2-phosphoglycerate: Lys-341, Arg-370, Ser-371, and Lys-392. Lys-341 acts as the Proton acceptor in catalysis.

The protein belongs to the enolase family. Mg(2+) is required as a cofactor.

It is found in the cytoplasm. The protein localises to the secreted. The protein resides in the cell surface. It carries out the reaction (2R)-2-phosphoglycerate = phosphoenolpyruvate + H2O. It functions in the pathway carbohydrate degradation; glycolysis; pyruvate from D-glyceraldehyde 3-phosphate: step 4/5. In terms of biological role, catalyzes the reversible conversion of 2-phosphoglycerate (2-PG) into phosphoenolpyruvate (PEP). It is essential for the degradation of carbohydrates via glycolysis. This chain is Enolase, found in Lacticaseibacillus casei (strain BL23) (Lactobacillus casei).